We begin with the raw amino-acid sequence, 162 residues long: Large ribosomal subunit protein bL17 (162 aa).

Residues 126 to 162 (ATAKKATRTRRSKKSAAATEAPAAPAAETTEEAPKAE) form a disordered region. A compositionally biased stretch (basic residues) spans 130-139 (KATRTRRSKK). The segment covering 140–153 (SAAATEAPAAPAAE) has biased composition (low complexity).

It belongs to the bacterial ribosomal protein bL17 family. As to quaternary structure, part of the 50S ribosomal subunit. Contacts protein L32.

This Phocaeicola vulgatus (strain ATCC 8482 / DSM 1447 / JCM 5826 / CCUG 4940 / NBRC 14291 / NCTC 11154) (Bacteroides vulgatus) protein is Large ribosomal subunit protein bL17.